The sequence spans 565 residues: uncharacterized protein (565 aa).

This is an uncharacterized protein from Acanthamoeba polyphaga (Amoeba).